Consider the following 908-residue polypeptide: Alanine--tRNA ligase (908 aa).

4 residues coordinate Zn(2+): histidine 596, histidine 600, cysteine 698, and histidine 702.

It belongs to the class-II aminoacyl-tRNA synthetase family. Requires Zn(2+) as cofactor.

It is found in the cytoplasm. The enzyme catalyses tRNA(Ala) + L-alanine + ATP = L-alanyl-tRNA(Ala) + AMP + diphosphate. Its function is as follows. Catalyzes the attachment of alanine to tRNA(Ala) in a two-step reaction: alanine is first activated by ATP to form Ala-AMP and then transferred to the acceptor end of tRNA(Ala). Also edits incorrectly charged Ser-tRNA(Ala) and Gly-tRNA(Ala) via its editing domain. The protein is Alanine--tRNA ligase of Lysinibacillus sphaericus (strain C3-41).